The primary structure comprises 588 residues: Adenine deaminase (588 aa).

This sequence belongs to the metallo-dependent hydrolases superfamily. Adenine deaminase family. As to quaternary structure, homodimer. The cofactor is Mn(2+).

The catalysed reaction is adenine + H2O + H(+) = hypoxanthine + NH4(+). This chain is Adenine deaminase, found in Escherichia fergusonii (strain ATCC 35469 / DSM 13698 / CCUG 18766 / IAM 14443 / JCM 21226 / LMG 7866 / NBRC 102419 / NCTC 12128 / CDC 0568-73).